The chain runs to 405 residues: MAVGLGPLPALHPVPGFELGISSAGIKRPGRKDVVVMRCAEGSSVAGVFTLNAFCAAPVILAKQRVQGTVRYLLTNTGNANAGTGEPGLAAARRTCEKLAQLTGVDASAVLPYSTGVIGEPLPVEKIEGALQAAIDDLSVDNWAAAATGIMTTDTLPKGTSRQFSHDGVTVTVTGISKGAGMIRPNMATMLGYIATDAKVAQSVLQDLIRDGANKSFNRITIDGDTSTNDCCMLIATGQADLPEITEAKGPLFEALKKAVFDVCMEVAQAIVRDGEGATKFVTVEVNGGGNHQECLDVGYAVAHSPLIKTALFASDPNWGRILAAVGRAGVPDLDVSKIDVFLGGVCIASQGCRATTYTEEQGSAVMAEEEITIRIELGRGDCSETIWTTDLSHEYVKINAEYRT.

Substrate is bound by residues Thr-152, Lys-178, Thr-189, Glu-276, Asn-400, and Thr-405. Residue Thr-189 is the Nucleophile of the active site.

It belongs to the ArgJ family. In terms of assembly, heterotetramer of two alpha and two beta chains.

It is found in the cytoplasm. It catalyses the reaction N(2)-acetyl-L-ornithine + L-glutamate = N-acetyl-L-glutamate + L-ornithine. The enzyme catalyses L-glutamate + acetyl-CoA = N-acetyl-L-glutamate + CoA + H(+). Its pathway is amino-acid biosynthesis; L-arginine biosynthesis; L-ornithine and N-acetyl-L-glutamate from L-glutamate and N(2)-acetyl-L-ornithine (cyclic): step 1/1. It participates in amino-acid biosynthesis; L-arginine biosynthesis; N(2)-acetyl-L-ornithine from L-glutamate: step 1/4. Its function is as follows. Catalyzes two activities which are involved in the cyclic version of arginine biosynthesis: the synthesis of N-acetylglutamate from glutamate and acetyl-CoA as the acetyl donor, and of ornithine by transacetylation between N(2)-acetylornithine and glutamate. In Pseudomonas syringae pv. syringae (strain B728a), this protein is Arginine biosynthesis bifunctional protein ArgJ.